The primary structure comprises 217 residues: MINLDIARRRMVENQIVARGIKDRRVIDAMLKVPRHIFVEEAMSAQAYSDSSLPIGEKQTISQPYMVALMSGMLQLTGKEKVLELGTGSGYQAAILAELADRVYTVERIRPLALRARKALDSLGYLNVNLKIGDGTDGWASEAPFDAILVTAGAPDVPMHLIDQLAVGGKLVIPVGNQSEQTLVRITKGENGAVSREDSIGCRFVKLIGRYGWSGED.

S62 is an active-site residue.

The protein belongs to the methyltransferase superfamily. L-isoaspartyl/D-aspartyl protein methyltransferase family.

Its subcellular location is the cytoplasm. It catalyses the reaction [protein]-L-isoaspartate + S-adenosyl-L-methionine = [protein]-L-isoaspartate alpha-methyl ester + S-adenosyl-L-homocysteine. In terms of biological role, catalyzes the methyl esterification of L-isoaspartyl residues in peptides and proteins that result from spontaneous decomposition of normal L-aspartyl and L-asparaginyl residues. It plays a role in the repair and/or degradation of damaged proteins. The chain is Protein-L-isoaspartate O-methyltransferase 2 from Geotalea uraniireducens (strain Rf4) (Geobacter uraniireducens).